The sequence spans 281 residues: Fibrinogen-like protein 1-like protein (281 aa).

Residues 1–33 (MGLQAGTRQLHGNLILLPVAVVMLLLCTSPVCA) form the signal peptide. Residues 34 to 246 (TASVGLPADC…RPSSWSNPPM (213 aa)) form the Fibrinogen C-terminal domain. Intrachain disulfides connect Cys-43/Cys-69 and Cys-201/Cys-213. The span at 260–269 (PSRSPSLPSP) shows a compositional bias: low complexity. The tract at residues 260-281 (PSRSPSLPSPITATHTVRNQLQ) is disordered. Residues 270 to 281 (ITATHTVRNQLQ) are compositionally biased toward polar residues.

Expressed in smal intestine, colon and lung.

Its function is as follows. Shows a cytidine deaminase activity on 2'-deoxycytidine (in vitro), however shows no RNA editing activity (in vitro). The polypeptide is Fibrinogen-like protein 1-like protein (Gallus gallus (Chicken)).